The chain runs to 280 residues: Pyridoxal 5'-phosphate synthase subunit PdxS (280 aa).

Asp12 is a D-ribose 5-phosphate binding site. The active-site Schiff-base intermediate with D-ribose 5-phosphate is Lys69. Gly141 contributes to the D-ribose 5-phosphate binding site. Arg153 contacts D-glyceraldehyde 3-phosphate. Residues Gly202 and 223–224 (GS) contribute to the D-ribose 5-phosphate site.

Belongs to the PdxS/SNZ family. As to quaternary structure, in the presence of PdxT, forms a dodecamer of heterodimers.

The catalysed reaction is aldehydo-D-ribose 5-phosphate + D-glyceraldehyde 3-phosphate + L-glutamine = pyridoxal 5'-phosphate + L-glutamate + phosphate + 3 H2O + H(+). It functions in the pathway cofactor biosynthesis; pyridoxal 5'-phosphate biosynthesis. In terms of biological role, catalyzes the formation of pyridoxal 5'-phosphate from ribose 5-phosphate (RBP), glyceraldehyde 3-phosphate (G3P) and ammonia. The ammonia is provided by the PdxT subunit. Can also use ribulose 5-phosphate and dihydroxyacetone phosphate as substrates, resulting from enzyme-catalyzed isomerization of RBP and G3P, respectively. The chain is Pyridoxal 5'-phosphate synthase subunit PdxS from Fusobacterium nucleatum subsp. nucleatum (strain ATCC 25586 / DSM 15643 / BCRC 10681 / CIP 101130 / JCM 8532 / KCTC 2640 / LMG 13131 / VPI 4355).